Reading from the N-terminus, the 192-residue chain is Probable apo-citrate lyase phosphoribosyl-dephospho-CoA transferase (192 aa).

Belongs to the CitX family.

It catalyses the reaction apo-[citrate lyase ACP] + 2'-(5''-triphospho-alpha-D-ribosyl)-3'-dephospho-CoA = holo-[citrate lyase ACP] + diphosphate. In terms of biological role, transfers 2-(5''-triphosphoribosyl)-3'-dephosphocoenzyme-A on a serine residue to the apo-acyl carrier protein (gamma chain) of the citrate lyase to yield holo-acyl carrier protein. The polypeptide is Probable apo-citrate lyase phosphoribosyl-dephospho-CoA transferase (Streptococcus pyogenes serotype M18 (strain MGAS8232)).